A 517-amino-acid chain; its full sequence is GMP synthase [glutamine-hydrolyzing] (517 aa).

The Glutamine amidotransferase type-1 domain occupies 9–199; the sequence is RILILDFGSQ…VLGVCGCERL (191 aa). Residue Cys86 is the Nucleophile of the active site. Active-site residues include His173 and Glu175. One can recognise a GMPS ATP-PPase domain in the interval 200 to 392; it reads WTSESIIEDA…LGLPYNMLYR (193 aa). ATP is bound at residue 227–233; sequence SGGVDSS.

In terms of assembly, homodimer.

It catalyses the reaction XMP + L-glutamine + ATP + H2O = GMP + L-glutamate + AMP + diphosphate + 2 H(+). The protein operates within purine metabolism; GMP biosynthesis; GMP from XMP (L-Gln route): step 1/1. Catalyzes the synthesis of GMP from XMP. The chain is GMP synthase [glutamine-hydrolyzing] from Vibrio parahaemolyticus serotype O3:K6 (strain RIMD 2210633).